We begin with the raw amino-acid sequence, 149 residues long: Inner membrane protein YidI (149 aa).

The Cytoplasmic portion of the chain corresponds to 1-8; the sequence is MGIIAQNK. The chain crosses the membrane as a helical span at residues 9–31; that stretch reads ISSLGMLFGAIALMMGIIHFSFG. Residues 32–77 lie on the Periplasmic side of the membrane; it reads PFSAPPPTFESIVADKTAEIKRGLLAGIKGEKITTVEKKEDVDVDK. The helical transmembrane segment at 78–97 threads the bilayer; the sequence is ILNQSGIALAIAALLCAFIG. The Cytoplasmic portion of the chain corresponds to 98-117; sequence GMRKENRWGIRGALVFGGGT. A helical membrane pass occupies residues 118–140; sequence LAFHTLLFGIGIVCSILLIFLIF. Residues 141-149 lie on the Periplasmic side of the membrane; that stretch reads SFLTGGSLV.

It localises to the cell inner membrane. In Escherichia coli (strain K12), this protein is Inner membrane protein YidI (yidI).